We begin with the raw amino-acid sequence, 146 residues long: Small ribosomal subunit protein bS6 (146 aa).

The tract at residues G94–P146 is disordered. Basic and acidic residues-rich tracts occupy residues G106–D115 and E134–P146.

It belongs to the bacterial ribosomal protein bS6 family.

Its function is as follows. Binds together with bS18 to 16S ribosomal RNA. The polypeptide is Small ribosomal subunit protein bS6 (Nitrosomonas europaea (strain ATCC 19718 / CIP 103999 / KCTC 2705 / NBRC 14298)).